We begin with the raw amino-acid sequence, 99 residues long: Protein S100-Z (99 aa).

EF-hand domains are found at residues 13 to 48 (ITVFHNYSGSEGDKYKLSKGELKELLNAELTDFLMS) and 50 to 85 (KDPMLVEKIMNDLDSNKDNEVDFNEFVVLVAALTVA). Ca(2+) is bound by residues S20, E23, D25, K28, E33, D63, N65, D67, E69, and E74.

It belongs to the S-100 family. As to quaternary structure, homodimer. Homodimers may assemble into larger stable oligomers. In larva at 5 days post-fertilization, shows very restricted expression only in a few large cells of the olfactory placode. More widely expressed in the adult. Expressed at higher levels in gut than in spleen, head kidney and gill.

The polypeptide is Protein S100-Z (Danio rerio (Zebrafish)).